Consider the following 714-residue polypeptide: BRCA1-associated RING domain protein 1 (714 aa).

The RING-type zinc-finger motif lies at 25 to 63; the sequence is CPLCLKLLNRPVLLPCDHVFCDSCVHKSSQVESGCPVCK. Disordered regions lie at residues 106–165 and 254–283; these read YKND…QDWT and KAQN…DAME. Positions 118–134 are enriched in basic and acidic residues; sequence KHGESEDSEMTDKDVSK. The segment covering 135-147 has biased composition (low complexity); that stretch reads RSGGTDSSSRDGS. 2 stretches are compositionally biased toward basic and acidic residues: residues 155–165 and 264–283; these read SDPRPKHQDWT and SHTE…DAME. The C2HC pre-PHD-type zinc-finger motif lies at 331 to 382; that stretch reads ITICGFCQSARVSEATGEMLHYSRGRPVDGDDIFRSNVIHVHSACIEWAPQV. A PHD-type zinc finger spans residues 402–451; the sequence is IKCTKCSLKGAALGCFVKSCRRSYHVPCAREISRCRWDYEDFLLLCPAHS. BRCT domains are found at residues 482 to 577 and 598 to 713; these read EQTP…PFEI and NKPK…HPVI.

As to quaternary structure, component of a DNA-protein complex on WUS and WOX5 promoters. Interacts with SYD. Forms heterodimer with BRCA1. As to expression, expressed in the shoot apical meristem (SAM), roots, flowers, embryos and seedlings. Mostly expressed in flowers and siliques, and, to a lower extent, in roots, rosette leaves, inflorescence and young cauline leaves.

Its subcellular location is the nucleus. In terms of biological role, binds specifically to H3K4me3 regions of target genes (e.g. WUS and WOX5) promoters to repress their transcription via chromatin remodeling. Required for the shoot apical meristem (SAM) organization and maintenance, by confining WUS expression to the organizing center, and for the quiescent center (QC) development in the root apical meristem (RAM), by repressing WOX5 expression in the root proximal meristem. Plays a role in DNA repair and in cell-cycle control. Required for the repair of DNA double-strand breaks (DSBs), both natural and induced by genotoxic stress, by homologous recombination (HR). The chain is BRCA1-associated RING domain protein 1 from Arabidopsis thaliana (Mouse-ear cress).